Consider the following 236-residue polypeptide: MATPHIAANPGDFADTVLMPGDPLRAKHIAETYLANPVLVNDVRGMLGYTGEYRGRMLSVMGSGMGVPSISIYAHELFTQFNVKNIVRIGSCGSIRDEVKVRDIVIGMGAGTDSLVNRVRLNHYDFAAIADYDLLEPVVNAARRREARFHVGALFTTDLFYAADPGLTERLSAHGVKAVEMEAAGLYGVAAECGGKALALCTVSDHLLSGERLSPEERRTSFNDMVEIALEAAVGF.

H5 provides a ligand contact to a purine D-ribonucleoside. Phosphate is bound by residues G21, R25, R44, and R88–S91. A purine D-ribonucleoside-binding positions include E180–E182 and S204–D205. The active-site Proton donor is the D205.

Belongs to the PNP/UDP phosphorylase family. As to quaternary structure, homohexamer; trimer of homodimers.

The enzyme catalyses a purine D-ribonucleoside + phosphate = a purine nucleobase + alpha-D-ribose 1-phosphate. It carries out the reaction a purine 2'-deoxy-D-ribonucleoside + phosphate = a purine nucleobase + 2-deoxy-alpha-D-ribose 1-phosphate. Its function is as follows. Catalyzes the reversible phosphorolytic breakdown of the N-glycosidic bond in the beta-(deoxy)ribonucleoside molecules, with the formation of the corresponding free purine bases and pentose-1-phosphate. This is Purine nucleoside phosphorylase DeoD-type from Hahella chejuensis (strain KCTC 2396).